Consider the following 600-residue polypeptide: Zinc metalloproteinase-disintegrin-like cobrin (600 aa).

Residues M1–S8 form the signal peptide. Positions I9–L179 are excised as a propeptide. The Peptidase M12B domain maps to K193–P388. Residues E196 and D280 each coordinate Ca(2+). 3 disulfide bridges follow: C304–C383, C344–C367, and C346–C351. Zn(2+) is bound by residues H329, H333, and H339. The Ca(2+) site is built by C383, N386, I398, N401, F403, E405, E408, and D411. A Disintegrin domain is found at P396–N482. Disulfide bonds link C399-C428, C410-C423, C412-C418, C422-C445, C436-C442, C441-C467, C454-C474, C461-C492, C486-C497, C504-C554, C519-C562, C532-C542, C549-C588, and C582-C593. A glycan (N-linked (GlcNAc...) asparagine) is linked at N424. The D/ECD-tripeptide motif lies at D460–D462. The Ca(2+) site is built by D462, L463, E465, D477, and V478.

This sequence belongs to the venom metalloproteinase (M12B) family. P-III subfamily. P-IIIa sub-subfamily. As to quaternary structure, monomer. Zn(2+) serves as cofactor. Expressed by the venom gland.

It localises to the secreted. In terms of biological role, snake venom zinc metalloproteinase that may cleave complement protein C3 into C3c-like (C3o). In Naja kaouthia (Monocled cobra), this protein is Zinc metalloproteinase-disintegrin-like cobrin.